The primary structure comprises 92 residues: MTTKAELVTAIAEKAGINKNQAKDALEAFIEAVTDSLKSGQDVRLVGFGTFKAVTRAAGTARNPRTGETVNRPASKTARFQVGEGLKSSLNS.

Residues Ala-58–Ser-92 are disordered.

Belongs to the bacterial histone-like protein family. Homodimer.

Functionally, histone-like DNA-binding protein which is capable of wrapping DNA to stabilize it, and thus to prevent its denaturation under extreme environmental conditions. The chain is DNA-binding protein HU (hup) from Caulobacter vibrioides (strain ATCC 19089 / CIP 103742 / CB 15) (Caulobacter crescentus).